The primary structure comprises 467 residues: H(+)/Cl(-) exchange transporter ClcA (467 aa).

At 1–30 (MKSQTIPTRRVRGFRRAAVIRQLLSRDKTP) the chain is on the cytoplasmic side. A helical membrane pass occupies residues 31–67 (LTILLLASLTGVLAGLAGVAFEKAVAWVTAHRIEGLA). Topologically, residues 68 to 74 (QVAHIPW) are periplasmic. The helical transmembrane segment at 75 to 98 (LVWLLAFLFSALLAMVGYFLVRRF) threads the bilayer. Residues 99–106 (APEAGGSG) are Cytoplasmic-facing. The Selectivity filter part_1 motif lies at 104–108 (GSGIP). Serine 105 is a binding site for chloride. An intramembrane region (helical) is located at residues 107–114 (IPEIEGAL). Residues 115 to 121 (EELRPVR) are Cytoplasmic-facing. A helical transmembrane segment spans residues 122-139 (WWRVLPVKFFGGMGTLGA). The Periplasmic segment spans residues 140-145 (GMVLGR). A Selectivity filter part_2 motif is present at residues 144 to 148 (GREGP). A helical membrane pass occupies residues 146-164 (EGPMVQMGGNIGRMVLDIF). Residues 165 to 174 (HRPDAEARHT) are Cytoplasmic-facing. 2 intramembrane regions (helical) span residues 175-187 (LLAT…LAAA) and 191-199 (PLAGILFII). The Cytoplasmic portion of the chain corresponds to 200-212 (EEMRTQFHYNLIS). Residues 213 to 230 (IKAVFTGVIMSTIVFRIF) form a helical membrane-spanning segment. Topologically, residues 231-250 (NGEKSVIEVGQLTDAPVYTL) are periplasmic. The chain crosses the membrane as a helical span at residues 251-279 (WLYLLLGIIFGAVGPLFNRLVLGMQDVFA). Residues 280 to 285 (RIHGGN) are Cytoplasmic-facing. The chain crosses the membrane as a helical span at residues 286–307 (TTRWVLLGGAIGGACGLLALWE). Over 308-327 (PAAAGGGFGLIPIAAAGNFT) the chain is Periplasmic. A helical membrane pass occupies residues 328–347 (VGMLLFIFIARVVTTVFCFS). Residues 348 to 352 (SGAPG) lie on the Cytoplasmic side of the membrane. The short motif at 353–357 (GIFAP) is the Selectivity filter part_3 element. A helical transmembrane segment spans residues 353–374 (GIFAPMLALGTLLGSAFGMACA). Positions 354 and 355 each coordinate chloride. Topologically, residues 375 to 384 (AWFPQWHLQA) are periplasmic. The helical intramembrane region spans 385–399 (GTFAIAGMGALLAAS). Residues 400 to 402 (VRA) constitute an intramembrane region (note=Loop between two helices). Residues 403 to 414 (PITGIVLVLEMT) constitute an intramembrane region (helical). An intramembrane region (note=Loop between two helices) is located at residues 415-419 (DNYQL). Residues 420–436 (ILPMIITCLGATLLAQF) traverse the membrane as a helical segment. At 437 to 467 (LGGKPLYSTILARTLAKQEAERQAQADGRNT) the chain is on the cytoplasmic side. Tyrosine 443 provides a ligand contact to chloride.

This sequence belongs to the chloride channel (TC 2.A.49) family. ClcA subfamily. In terms of assembly, homodimer.

The protein resides in the cell inner membrane. The enzyme catalyses 2 chloride(in) + H(+)(out) = 2 chloride(out) + H(+)(in). Proton-coupled chloride transporter. Functions as antiport system and exchanges two chloride ions for 1 proton. Probably acts as an electrical shunt for an outwardly-directed proton pump that is linked to amino acid decarboxylation, as part of the extreme acid resistance (XAR) response. This is H(+)/Cl(-) exchange transporter ClcA from Cronobacter sakazakii (strain ATCC BAA-894) (Enterobacter sakazakii).